A 293-amino-acid polypeptide reads, in one-letter code: Acetyl-coenzyme A carboxylase carboxyl transferase subunit beta (293 aa).

The region spanning 29–293 is the CoA carboxyltransferase N-terminal domain; that stretch reads LWVKCSECSQ…GVKELAEANT (265 aa). Zn(2+)-binding residues include Cys33, Cys36, Cys52, and Cys55. The segment at 33–55 adopts a C4-type zinc-finger fold; the sequence is CSECSQVAYRKDLISNFNVCNNC.

This sequence belongs to the AccD/PCCB family. In terms of assembly, acetyl-CoA carboxylase is a heterohexamer composed of biotin carboxyl carrier protein (AccB), biotin carboxylase (AccC) and two subunits each of ACCase subunit alpha (AccA) and ACCase subunit beta (AccD). Zn(2+) is required as a cofactor.

Its subcellular location is the cytoplasm. The enzyme catalyses N(6)-carboxybiotinyl-L-lysyl-[protein] + acetyl-CoA = N(6)-biotinyl-L-lysyl-[protein] + malonyl-CoA. The protein operates within lipid metabolism; malonyl-CoA biosynthesis; malonyl-CoA from acetyl-CoA: step 1/1. Its function is as follows. Component of the acetyl coenzyme A carboxylase (ACC) complex. Biotin carboxylase (BC) catalyzes the carboxylation of biotin on its carrier protein (BCCP) and then the CO(2) group is transferred by the transcarboxylase to acetyl-CoA to form malonyl-CoA. In Prochlorococcus marinus (strain AS9601), this protein is Acetyl-coenzyme A carboxylase carboxyl transferase subunit beta.